The sequence spans 817 residues: Protein kintoun (817 aa).

Disordered regions lie at residues 233 to 259 (AEST…PRCS), 385 to 404 (AGAR…RKSC), 410 to 445 (AGTA…TPEN), and 473 to 503 (VQTS…KPLC). The segment covering 386–401 (GAREESADSSGADHGR) has biased composition (basic and acidic residues). Residues S622 and S631 each carry the phosphoserine modification. Residues 653 to 692 (ECSDPDGLQGKEKGVKEECPLSEKENTEHSTTSTADSNSS) are disordered. The segment covering 661 to 680 (QGKEKGVKEECPLSEKENTE) has biased composition (basic and acidic residues). Positions 681-692 (HSTTSTADSNSS) are enriched in polar residues.

The protein belongs to the PIH1 family. Kintoun subfamily. Interacts with CFAP300. Interacts with DNAI2 and HSPA1A. Interacts with DNAAF4. Interacts with DNAAF6/PIH1D3.

It localises to the cytoplasm. It is found in the dynein axonemal particle. In terms of biological role, required for cytoplasmic pre-assembly of axonemal dyneins, thereby playing a central role in motility in cilia and flagella. Involved in pre-assembly of dynein arm complexes in the cytoplasm before intraflagellar transport loads them for the ciliary compartment. The sequence is that of Protein kintoun from Rattus norvegicus (Rat).